Reading from the N-terminus, the 152-residue chain is Maintenance of carboxysome distribution protein B (152 aa).

As to quaternary structure, self-associates, interacts with McdA probably via the C-terminus of both proteins. Homohexamerizes. Probably a trimer of dimers. Interacts with most of the shell components of the carboxysome (CcmK2, CcmK3, CcmK4, CcmL and CcmO, but not CcmP) via its C-terminus.

The protein resides in the carboxysome. McdA and McdB together mediate carboxysome (Cb) spacing, size, ultrastructure and probably inheritance in the cell. Together they prevent Cb aggregation. McdA is an ATPase that forms dynamic gradients on the nucleoid in response to adapter protein McdB, which associates with carboxysomes. The interplay between McdA gradients on the nucleoid and McdB-bound carboxysomes result in the equal spacing of Cbs along the cell length. McdB may have an additional function in cell divison. Stimulates the ATPase activity of McdA, causing McdA to be released from DNA. Overexpression leads to loss of McdA oscillation and formation of large Cb aggregates which colocalize with McdB, as well as diffuse McdB staining in the cytoplasm. Undergoes liquid-liquid phase separation between pH 6.5-7.5 and at concentrations between 1 uM and 167 uM. Forms polar foci upon overexpression in E.coli. Functionally, incorrect positioning (aggregation) of carboxysomes results in reduced CO(2) fixation by encapsulated RuBisCO, which leads to slower growth, cell elongation, asymmetric cell division and an increase in RuBisCO levels. The protein is Maintenance of carboxysome distribution protein B of Synechococcus elongatus (strain ATCC 33912 / PCC 7942 / FACHB-805) (Anacystis nidulans R2).